Here is a 371-residue protein sequence, read N- to C-terminus: N-acetyldiaminopimelate deacetylase (371 aa).

Asp-68 is a catalytic residue. Glu-127 serves as the catalytic Proton acceptor.

It belongs to the peptidase M20A family. N-acetyldiaminopimelate deacetylase subfamily.

The enzyme catalyses N-acetyl-(2S,6S)-2,6-diaminopimelate + H2O = (2S,6S)-2,6-diaminopimelate + acetate. The protein operates within amino-acid biosynthesis; L-lysine biosynthesis via DAP pathway; LL-2,6-diaminopimelate from (S)-tetrahydrodipicolinate (acetylase route): step 3/3. Its function is as follows. Catalyzes the conversion of N-acetyl-diaminopimelate to diaminopimelate and acetate. The sequence is that of N-acetyldiaminopimelate deacetylase from Halalkalibacterium halodurans (strain ATCC BAA-125 / DSM 18197 / FERM 7344 / JCM 9153 / C-125) (Bacillus halodurans).